Here is a 242-residue protein sequence, read N- to C-terminus: Small ribosomal subunit protein uS3 (242 aa).

The KH type-2 domain maps to 39 to 109 (IRQYVKATLA…QIRINVVEVT (71 aa)). The disordered stretch occupies residues 220-242 (KVNQPKRRQQKRRQQYDDRSNEG). Residues 223–232 (QPKRRQQKRR) show a composition bias toward basic residues. Over residues 233–242 (QQYDDRSNEG) the composition is skewed to basic and acidic residues.

The protein belongs to the universal ribosomal protein uS3 family. As to quaternary structure, part of the 30S ribosomal subunit. Forms a tight complex with proteins S10 and S14.

Functionally, binds the lower part of the 30S subunit head. Binds mRNA in the 70S ribosome, positioning it for translation. The protein is Small ribosomal subunit protein uS3 of Trichodesmium erythraeum (strain IMS101).